The chain runs to 448 residues: Signal recognition particle 54 kDa protein (448 aa).

GTP contacts are provided by residues 107–114 (GIQGSGKT), 189–193 (DTAGR), and 247–250 (TKLD).

It belongs to the GTP-binding SRP family. SRP54 subfamily. As to quaternary structure, part of the signal recognition particle protein translocation system, which is composed of SRP and FtsY. Archaeal SRP consists of a 7S RNA molecule of 300 nucleotides and two protein subunits: SRP54 and SRP19.

The protein localises to the cytoplasm. The catalysed reaction is GTP + H2O = GDP + phosphate + H(+). Its function is as follows. Involved in targeting and insertion of nascent membrane proteins into the cytoplasmic membrane. Binds to the hydrophobic signal sequence of the ribosome-nascent chain (RNC) as it emerges from the ribosomes. The SRP-RNC complex is then targeted to the cytoplasmic membrane where it interacts with the SRP receptor FtsY. The chain is Signal recognition particle 54 kDa protein from Thermococcus gammatolerans (strain DSM 15229 / JCM 11827 / EJ3).